The sequence spans 153 residues: Deoxyuridine 5'-triphosphate nucleotidohydrolase (153 aa).

Substrate is bound by residues 65–67 (RSG), Asn-78, and 82–84 (TID). The interval 132–153 (MTQRGEGGFGHTGISAVHPRTH) is disordered.

It belongs to the dUTPase family. Mg(2+) serves as cofactor.

It carries out the reaction dUTP + H2O = dUMP + diphosphate + H(+). It participates in pyrimidine metabolism; dUMP biosynthesis; dUMP from dCTP (dUTP route): step 2/2. Functionally, this enzyme is involved in nucleotide metabolism: it produces dUMP, the immediate precursor of thymidine nucleotides and it decreases the intracellular concentration of dUTP so that uracil cannot be incorporated into DNA. The sequence is that of Deoxyuridine 5'-triphosphate nucleotidohydrolase from Chlorobium limicola (strain DSM 245 / NBRC 103803 / 6330).